Here is a 233-residue protein sequence, read N- to C-terminus: Lipoprotein-releasing system ATP-binding protein LolD (233 aa).

The region spanning 6–233 is the ABC transporter domain; that stretch reads LQCDNLCKRY…TAELSLMGAE (228 aa). 42–49 contacts ATP; that stretch reads GSSGSGKS.

The protein belongs to the ABC transporter superfamily. Lipoprotein translocase (TC 3.A.1.125) family. In terms of assembly, the complex is composed of two ATP-binding proteins (LolD) and two transmembrane proteins (LolC and LolE).

The protein resides in the cell inner membrane. Its function is as follows. Part of the ABC transporter complex LolCDE involved in the translocation of mature outer membrane-directed lipoproteins, from the inner membrane to the periplasmic chaperone, LolA. Responsible for the formation of the LolA-lipoprotein complex in an ATP-dependent manner. Such a release is dependent of the sorting-signal (absence of an Asp at position 2 of the mature lipoprotein) and of LolA. The sequence is that of Lipoprotein-releasing system ATP-binding protein LolD from Escherichia coli (strain K12).